We begin with the raw amino-acid sequence, 238 residues long: Small ribosomal subunit protein uS2c (238 aa).

The protein belongs to the universal ribosomal protein uS2 family.

It is found in the plastid. It localises to the chloroplast. The polypeptide is Small ribosomal subunit protein uS2c (rps2) (Nuphar advena (Common spatterdock)).